The sequence spans 406 residues: GTPase Obg (406 aa).

The Obg domain maps to 1-159 (MRFVDEAVIT…REIRLELKVL (159 aa)). The tract at residues 120-143 (GGEGGLGNTHFKSSTNRAPRKCTT) is disordered. Residues 160-333 (ADVGLLGMPN…VVYYLMDQIE (174 aa)) form the OBG-type G domain. GTP contacts are provided by residues 166 to 173 (GMPNAGKS), 191 to 195 (FTTMV), 213 to 216 (DIPG), 283 to 286 (NKLD), and 314 to 316 (SGL). Residues Ser173 and Thr193 each contribute to the Mg(2+) site. Positions 381–406 (ESMMDDDDDFDDDEDDGDVESIYVRD) are disordered. Positions 383 to 399 (MMDDDDDFDDDEDDGDV) are enriched in acidic residues.

It belongs to the TRAFAC class OBG-HflX-like GTPase superfamily. OBG GTPase family. In terms of assembly, monomer. The cofactor is Mg(2+).

It is found in the cytoplasm. An essential GTPase which binds GTP, GDP and possibly (p)ppGpp with moderate affinity, with high nucleotide exchange rates and a fairly low GTP hydrolysis rate. Plays a role in control of the cell cycle, stress response, ribosome biogenesis and in those bacteria that undergo differentiation, in morphogenesis control. The polypeptide is GTPase Obg (Acinetobacter baumannii (strain SDF)).